Consider the following 391-residue polypeptide: uncharacterized protein (391 aa).

The signal sequence occupies residues 1 to 20 (MRKLFLLSILMIGVIVAFAG). A lipid anchor (S-archaeol cysteine) is attached at cysteine 21. The Fe/B12 periplasmic-binding domain occupies 104–377 (RIVTDFYCPI…DFAKMIHPEL (274 aa)).

It localises to the cell membrane. This is an uncharacterized protein from Methanocaldococcus jannaschii (strain ATCC 43067 / DSM 2661 / JAL-1 / JCM 10045 / NBRC 100440) (Methanococcus jannaschii).